Consider the following 98-residue polypeptide: VQ motif-containing protein 1 (98 aa).

Positions 27–36 match the VQ motif; that stretch reads FKTIVQELTG.

Interacts with WRKY33.

Its subcellular location is the nucleus. May modulate WRKY transcription factor activities. The protein is VQ motif-containing protein 1 of Arabidopsis thaliana (Mouse-ear cress).